Reading from the N-terminus, the 184-residue chain is Ribosome-recycling factor (184 aa).

The protein belongs to the RRF family.

The protein localises to the cytoplasm. Its function is as follows. Responsible for the release of ribosomes from messenger RNA at the termination of protein biosynthesis. May increase the efficiency of translation by recycling ribosomes from one round of translation to another. The sequence is that of Ribosome-recycling factor from Borrelia turicatae (strain 91E135).